Reading from the N-terminus, the 94-residue chain is Defensin alpha 5 (94 aa).

Residues 1-19 form the signal peptide; the sequence is MRTIAILAAILLVALQAQA. Intrachain disulfides connect Cys-65-Cys-93, Cys-67-Cys-82, and Cys-72-Cys-92.

The protein belongs to the alpha-defensin family. As to quaternary structure, homodimer. Homotetramer. Interacts with B.antracis lef/lethal factor. In terms of processing, glycosylated. Post-translationally, proteolytically cleaved at Arg-62 by trypsin. Both the propeptide form proHD5/HD5(20-94) and HD5(56-94) are cleaved into the lumenal peptide form HD5(63-94) by trypsin. Unprocessed proHD5 exerts antimicrobial activities, but peptide potency is enhanced by peptide processing. Proteolytically cleaved in duodenal fluid; derived fragments are antimicrobially active against commensal bacteria (in vitro).

The protein localises to the secreted. Its subcellular location is the cytoplasmic vesicle. The protein resides in the secretory vesicle. Its function is as follows. Host-defense peptide that maintains sterility in the urogenital system. Has antimicrobial activity against a wide range of bacteria, including Gram-negative E.coli, P.aeruginosa and S.typhimurium, and Gram-positive E.aerogenes, S.aureus, B.cereus, E.faecium and L.monocytogenes. Confers resistance to intestinal infection by S.typhimurium. Exhibits antimicrobial activity against enteric commensal bacteria such as B.adolescentis, L.acidophilus, B.breve, L.fermentum, B.longum and S.thermophilus. Binds to bacterial membranes and causes membrane disintegration. Induces the secretion of the chemokine IL-8 by intestinal epithelial cells. Binds to B.antracis lef/lethal factor, a major virulence factor from B.anthracis, and neutralizes its enzymatic activity. This Pan troglodytes (Chimpanzee) protein is Defensin alpha 5 (DEFA5).